We begin with the raw amino-acid sequence, 305 residues long: Regulator of microtubule dynamics protein 1 (305 aa).

An N6-succinyllysine modification is found at Lys160. TPR repeat units lie at residues 163 to 199 (AICISDVGDYEGIKVKIANAYVIKEHFEKAIELNPKD) and 217 to 253 (PWYQRRIAKVLFANPPSSTYEEALRYFHKAEEVDPNF). Lys245 carries the N6-succinyllysine modification.

This sequence belongs to the RMDN family. As to quaternary structure, interacts with microtubules.

It localises to the cytoplasm. It is found in the cytoskeleton. Its subcellular location is the spindle. The protein resides in the spindle pole. This Mus musculus (Mouse) protein is Regulator of microtubule dynamics protein 1 (Rmdn1).